A 416-amino-acid polypeptide reads, in one-letter code: Serine carboxypeptidase S10 family member 1 (416 aa).

The N-terminal stretch at 1 to 20 (MMKLLFIIISIIFVINVSNS) is a signal peptide. N-linked (GlcNAc...) asparagine glycosylation is found at N33 and N84. S156 is a catalytic residue. N-linked (GlcNAc...) asparagine glycans are attached at residues N235, N273, and N295. D338 is a catalytic residue. N385 carries N-linked (GlcNAc...) asparagine glycosylation. Residue H396 is part of the active site.

It belongs to the peptidase S10 family.

The protein resides in the secreted. Probable carboxypeptidase. This Dictyostelium discoideum (Social amoeba) protein is Serine carboxypeptidase S10 family member 1.